A 116-amino-acid polypeptide reads, in one-letter code: Putative serine proteinase inhibitor 2 homolog first part (116 aa).

The protein belongs to the serpin family. Poxviruses subfamily.

The protein is Putative serine proteinase inhibitor 2 homolog first part of Vaccinia virus (strain Copenhagen) (VACV).